The following is a 100-amino-acid chain: Urease subunit gamma (100 aa).

This sequence belongs to the urease gamma subunit family. In terms of assembly, heterotrimer of UreA (gamma), UreB (beta) and UreC (alpha) subunits. Three heterotrimers associate to form the active enzyme.

The protein localises to the cytoplasm. The enzyme catalyses urea + 2 H2O + H(+) = hydrogencarbonate + 2 NH4(+). It functions in the pathway nitrogen metabolism; urea degradation; CO(2) and NH(3) from urea (urease route): step 1/1. This chain is Urease subunit gamma, found in Staphylococcus epidermidis (strain ATCC 35984 / DSM 28319 / BCRC 17069 / CCUG 31568 / BM 3577 / RP62A).